The sequence spans 124 residues: uncharacterized protein (124 aa).

It localises to the cytoplasm. The protein localises to the nucleus. This is an uncharacterized protein from Schizosaccharomyces pombe (strain 972 / ATCC 24843) (Fission yeast).